A 311-amino-acid polypeptide reads, in one-letter code: MIHSRLIIIGSGPSGYTAAIYASRALLHPLLFEGFFSGISGGQLMTTTEVENFPGFPEGILGPKLMNNMKEQAVRFGTKTLAQDIISVDFSVRPFILKSKEETYSCDACIIATGASAKRLEIPGAGNDEFWQKGVTACAVCDGASPIFKNKDLYVIGGGDSALEEALYLTRYGSHVYVVHRRDKLRASKAMEARAQNNEKITFLWNSEIVKISGDSIVRSVDIKNVQTQEITTREAAGVFFAIGHKPNTDFLGGQLTLDESGYIVTEKGTSKTSVPGVFAAGDVQDKYYRQAVTSAGSGCIAALDAERFLG.

E33–Q43 provides a ligand contact to FAD. Cysteines 138 and 141 form a disulfide. FAD is bound at residue D283 to A292.

Belongs to the class-II pyridine nucleotide-disulfide oxidoreductase family. As to quaternary structure, homodimer. Requires FAD as cofactor.

The protein resides in the cytoplasm. It catalyses the reaction [thioredoxin]-dithiol + NADP(+) = [thioredoxin]-disulfide + NADPH + H(+). The chain is Thioredoxin reductase (trxB) from Chlamydia pneumoniae (Chlamydophila pneumoniae).